Reading from the N-terminus, the 172-residue chain is RNA silencing suppressor p19 (172 aa).

The span at 1 to 20 shows a compositional bias: basic and acidic residues; that stretch reads MERAIQGNDAREQANSERWD. A disordered region spans residues 1–37; that stretch reads MERAIQGNDAREQANSERWDGGSGGTTSPFKLPDESP.

It belongs to the tombusvirus protein p19 family. In terms of assembly, homodimer.

Viral suppressor of RNA silencing which binds specifically to silencing RNAs (siRNAs). Acts as a molecular caliper to specifically select siRNAs based on the length of the duplex region of the RNA. The chain is RNA silencing suppressor p19 from Tomato bushy stunt virus (strain Ja6) (TBSV).